A 349-amino-acid polypeptide reads, in one-letter code: Shematrin-like protein 1 (349 aa).

The first 16 residues, 1 to 16 (MLKLVCAVFLIATVSA), serve as a signal peptide directing secretion.

In terms of tissue distribution, prismatic layer of shell (at protein level).

Its subcellular location is the secreted. This is Shematrin-like protein 1 from Margaritifera margaritifera (Freshwater pearl mussel).